The chain runs to 265 residues: 4-hydroxy-tetrahydrodipicolinate reductase (265 aa).

NAD(+)-binding positions include 7 to 12 and D33; that span reads GASGRM. NADP(+) is bound at residue R34. NAD(+) contacts are provided by residues 96-98 and 120-123; these read GTT and AANM. Catalysis depends on H153, which acts as the Proton donor/acceptor. Residue H154 participates in (S)-2,3,4,5-tetrahydrodipicolinate binding. K157 acts as the Proton donor in catalysis. (S)-2,3,4,5-tetrahydrodipicolinate is bound at residue 163 to 164; it reads GT.

The protein belongs to the DapB family.

The protein localises to the cytoplasm. The catalysed reaction is (S)-2,3,4,5-tetrahydrodipicolinate + NAD(+) + H2O = (2S,4S)-4-hydroxy-2,3,4,5-tetrahydrodipicolinate + NADH + H(+). The enzyme catalyses (S)-2,3,4,5-tetrahydrodipicolinate + NADP(+) + H2O = (2S,4S)-4-hydroxy-2,3,4,5-tetrahydrodipicolinate + NADPH + H(+). Its pathway is amino-acid biosynthesis; L-lysine biosynthesis via DAP pathway; (S)-tetrahydrodipicolinate from L-aspartate: step 4/4. Its function is as follows. Catalyzes the conversion of 4-hydroxy-tetrahydrodipicolinate (HTPA) to tetrahydrodipicolinate. The chain is 4-hydroxy-tetrahydrodipicolinate reductase from Burkholderia orbicola (strain MC0-3).